A 583-amino-acid chain; its full sequence is Phosphoglucomutase, cytoplasmic (583 aa).

A disordered region spans residues 1-20 (MANFKVSRVETTPFEGQKPG). 2 residues coordinate alpha-D-glucose 1,6-bisphosphate: Arg-25 and Ser-124. The active-site Phosphoserine intermediate is the Ser-124. Residues Ser-124, Asp-300, Asp-302, and Asp-304 each contribute to the Mg(2+) site. Ser-124 bears the Phosphoserine mark. Alpha-D-glucose 1,6-bisphosphate is bound by residues Asp-304, Arg-305, Thr-368, Glu-387, Ser-389, and Lys-400.

This sequence belongs to the phosphohexose mutase family. Monomer. Mg(2+) serves as cofactor.

The protein localises to the cytoplasm. The enzyme catalyses alpha-D-glucose 1-phosphate = alpha-D-glucose 6-phosphate. It catalyses the reaction O-phospho-L-seryl-[protein] + alpha-D-glucose 1-phosphate = alpha-D-glucose 1,6-bisphosphate + L-seryl-[protein]. It carries out the reaction alpha-D-glucose 1,6-bisphosphate + L-seryl-[protein] = O-phospho-L-seryl-[protein] + alpha-D-glucose 6-phosphate. Catalyzes the reversible isomerization of alpha-D-glucose 1-phosphate to alpha-D-glucose 6-phosphate. The mechanism proceeds via the intermediate compound alpha-D-glucose 1,6-bisphosphate. This enzyme participates in both the breakdown and synthesis of glucose. The polypeptide is Phosphoglucomutase, cytoplasmic (PGM1) (Solanum tuberosum (Potato)).